The primary structure comprises 88 residues: Small ribosomal subunit protein uS15 (88 aa).

Belongs to the universal ribosomal protein uS15 family. As to quaternary structure, part of the 30S ribosomal subunit. Forms a bridge to the 50S subunit in the 70S ribosome, contacting the 23S rRNA.

In terms of biological role, one of the primary rRNA binding proteins, it binds directly to 16S rRNA where it helps nucleate assembly of the platform of the 30S subunit by binding and bridging several RNA helices of the 16S rRNA. Forms an intersubunit bridge (bridge B4) with the 23S rRNA of the 50S subunit in the ribosome. The protein is Small ribosomal subunit protein uS15 of Metamycoplasma arthritidis (strain 158L3-1) (Mycoplasma arthritidis).